The primary structure comprises 662 residues: ABC transporter G family member 17 (662 aa).

One can recognise an ABC transporter domain in the interval 22 to 276 (LAFNDLTYNV…FSEFGSPIPE (255 aa)). 69-76 (GASGAGKS) provides a ligand contact to ATP. The 211-residue stretch at 356–566 (VETVILAKRY…PYEAVLHNEF (211 aa)) folds into the ABC transmembrane type-2 domain. 6 helical membrane passes run 375 to 395 (LIGT…TVYW), 410 to 430 (FFSF…PAFI), 451 to 471 (VISH…GFAA), 486 to 508 (FIYY…TFVS), 514 to 536 (VMMS…GFYV), and 635 to 655 (LWVT…SLLL).

This sequence belongs to the ABC transporter superfamily. ABCG family. Eye pigment precursor importer (TC 3.A.1.204) subfamily.

It is found in the membrane. In Arabidopsis thaliana (Mouse-ear cress), this protein is ABC transporter G family member 17 (ABCG17).